A 520-amino-acid chain; its full sequence is Cytochrome P450 72A68 (520 aa).

A helical membrane pass occupies residues 11 to 31 (IILITVTFGLVYAWRVLNWMW). C466 is a heme binding site.

It belongs to the cytochrome P450 family. Requires heme as cofactor.

The protein localises to the membrane. The enzyme catalyses oleanolate + 3 reduced [NADPH--hemoprotein reductase] + 3 O2 = gypsogenate + 3 oxidized [NADPH--hemoprotein reductase] + 4 H2O + 4 H(+). Catalyzes the carboxylation of oleanolic acid at the C-23 position to form gypsogenic acid. Involved in the hemolytic saponin biosynthetic pathway. This chain is Cytochrome P450 72A68, found in Medicago truncatula (Barrel medic).